Reading from the N-terminus, the 884-residue chain is Cytosolic carboxypeptidase-like protein 5 (884 aa).

Residues 157 to 570 (YPFSYSDCQD…AMAIAALDMA (414 aa)) enclose the Peptidase M14 domain. Residues His-252 and Glu-255 each coordinate Zn(2+). Disordered stretches follow at residues 343-364 (HPQS…PLSD) and 376-401 (HLGH…KASG). Position 434 (His-434) interacts with Zn(2+). The active-site Proton donor/acceptor is Glu-516. Disordered regions lie at residues 603 to 737 (LSST…HSTG) and 784 to 859 (QVRP…RICY). Polar residues predominate over residues 620–635 (PPRSNSGLPVSCSENP). Composition is skewed to low complexity over residues 641–666 (SFST…NSPS) and 714–737 (PTSS…HSTG). Ser-839 carries the phosphoserine modification. Polar residues predominate over residues 846–857 (ISCSLSDSQSRI).

This sequence belongs to the peptidase M14 family. Zn(2+) is required as a cofactor.

It localises to the cytoplasm. Its subcellular location is the cytosol. It is found in the nucleus. The protein resides in the cytoskeleton. The protein localises to the spindle. It localises to the midbody. The enzyme catalyses gamma-L-glutamyl-L-glutamyl-[protein] + H2O = L-glutamyl-[protein] + L-glutamate. The catalysed reaction is (L-glutamyl)(n+1)-gamma-L-glutamyl-L-glutamyl-[protein] + H2O = (L-glutamyl)(n)-gamma-L-glutamyl-L-glutamyl-[protein] + L-glutamate. It catalyses the reaction C-terminal L-alpha-aminoacyl-L-glutamyl-[tubulin] + H2O = C-terminal L-alpha-aminoacyl-[tubulin] + L-glutamate. It carries out the reaction C-terminal L-alpha-aminoacyl-L-glutamyl-L-glutamyl-[tubulin] + H2O = C-terminal L-alpha-aminoacyl-L-glutamyl-[tubulin] + L-glutamate. Its function is as follows. Metallocarboxypeptidase that mediates deglutamylation of tubulin and non-tubulin target proteins. Catalyzes the removal of polyglutamate side chains present on the gamma-carboxyl group of glutamate residues within the C-terminal tail of alpha- and beta-tubulin. Cleaves alpha- and gamma-linked polyglutamate tubulin side-chain, as well as the branching point glutamate. Also catalyzes the removal of alpha-linked glutamate residues from the carboxy-terminus of alpha-tubulin. Mediates deglutamylation of nucleotidyltransferase CGAS, leading to CGAS antiviral defense response activation. The protein is Cytosolic carboxypeptidase-like protein 5 (AGBL5) of Ailuropoda melanoleuca (Giant panda).